The following is a 486-amino-acid chain: Cardiolipin synthase A (486 aa).

2 consecutive transmembrane segments (helical) span residues 3–23 (TVYTLVSWLAILGYWLLIAGV) and 38–58 (MAWLLIIYILPLVGIIAYLAV). PLD phosphodiesterase domains follow at residues 219–246 (MDLRQHRKMIMIDNYIAYTGSMNMVDPR) and 399–426 (EGGLLHTKSVLVDGELSLVGTVNLDMRS). Residues His224, Lys226, Asp231, His404, Lys406, and Asp411 contribute to the active site.

Belongs to the phospholipase D family. Cardiolipin synthase subfamily. ClsA sub-subfamily.

The protein resides in the cell inner membrane. It catalyses the reaction 2 a 1,2-diacyl-sn-glycero-3-phospho-(1'-sn-glycerol) = a cardiolipin + glycerol. Its function is as follows. Catalyzes the reversible phosphatidyl group transfer from one phosphatidylglycerol molecule to another to form cardiolipin (CL) (diphosphatidylglycerol) and glycerol. This chain is Cardiolipin synthase A, found in Escherichia coli O7:K1 (strain IAI39 / ExPEC).